We begin with the raw amino-acid sequence, 395 residues long: Extracellular cysteine protease (395 aa).

The signal sequence occupies residues 1–30 (MKKKLSYMITIMLAFTLSLALGLFFNSAHA). A propeptide spanning residues 31-221 (DSLPQKNGAN…TLEYQSTRNE (191 aa)) is cleaved from the precursor. Residues cysteine 245, histidine 341, and asparagine 362 contribute to the active site.

The protein belongs to the peptidase C47 family. Proteolytically cleaved.

Its subcellular location is the secreted. The protein resides in the cell wall. Cysteine protease able to cleave elastin, insulin, myoglobin, fibronectin, fibrinogen, HMW-kininogen, alpha-1-protease inhibitor and alpha-1-antitrypsin. Along with other extracellular proteases may contribute to the colonization and infection of human tissues. This is Extracellular cysteine protease (ecpA) from Staphylococcus epidermidis (strain ATCC 35984 / DSM 28319 / BCRC 17069 / CCUG 31568 / BM 3577 / RP62A).